The primary structure comprises 228 residues: Prepilin leader peptidase/N-methyltransferase (228 aa).

Helical transmembrane passes span 18–38 (LWGS…NVVI), 95–115 (RYPL…YLMA), 116–136 (PGVP…LAAI), 147–167 (LTLP…YVPL), 168–188 (AEAV…YWVF), and 204–224 (LLAA…LLLA).

This sequence belongs to the peptidase A24 family.

The protein resides in the cell inner membrane. The enzyme catalyses Typically cleaves a -Gly-|-Phe- bond to release an N-terminal, basic peptide of 5-8 residues from type IV prepilin, and then N-methylates the new N-terminal amino group, the methyl donor being S-adenosyl-L-methionine.. Functionally, plays an essential role in type IV pili and type II pseudopili formation by proteolytically removing the leader sequence from substrate proteins and subsequently monomethylating the alpha-amino group of the newly exposed N-terminal phenylalanine. The chain is Prepilin leader peptidase/N-methyltransferase (pulO) from Klebsiella pneumoniae.